Here is a 313-residue protein sequence, read N- to C-terminus: E3 ubiquitin-protein ligase RNF126 (313 aa).

At alanine 2 the chain carries N-acetylalanine. The residue at position 5 (serine 5) is a Phosphoserine. The segment at 5–100 (SPQPGRYFCH…FEIPTFPPGA (96 aa)) is required for interaction with BAG6. Zn(2+) contacts are provided by cysteine 13, cysteine 16, cysteine 29, and cysteine 32. The C4-type zinc finger occupies 13-32 (CHCCSVEIVPRLPDYICPRC). 2 disordered regions span residues 42–63 (EETR…QNRQ) and 95–128 (TFPP…RQPR). Polar residues predominate over residues 47 to 63 (TENGSAPSTAPTDQNRQ). Basic and acidic residues predominate over residues 103-116 (DDGRDPESRREREH). A compositionally biased stretch (basic residues) spans 117 to 128 (QSRHRYGARQPR). A sufficient for interaction with AICDA region spans residues 202–306 (TGPPPADKEK…SSSSSSSPSN (105 aa)). The segment at 231-272 (CPVCKEDYALGESVRQLPCNHLFHDSCIVPWLEQHDSCPVCR) adopts an RING-type zinc-finger fold. The segment at 279–313 (NTATNPPGLTGVGFSSSSSSSSSSSPSNENATSNS) is disordered. The span at 293–313 (SSSSSSSSSSSPSNENATSNS) shows a compositional bias: low complexity.

Interacts with CCDC50, EGFR, FLT3 and SCAMP3. Interacts with BAG6 (via ubiquitin-like domain); required for BAG6-dependent ubiquitination of proteins mislocalized to the cytosol. Interacts with CDKN1A. Interacts with AICDA. In terms of processing, ubiquitinated. May undergo autoubiquitination. Detected in B-cells (at protein level).

Its subcellular location is the cytoplasm. The protein resides in the nucleus. The enzyme catalyses S-ubiquitinyl-[E2 ubiquitin-conjugating enzyme]-L-cysteine + [acceptor protein]-L-lysine = [E2 ubiquitin-conjugating enzyme]-L-cysteine + N(6)-ubiquitinyl-[acceptor protein]-L-lysine.. It functions in the pathway protein modification; protein ubiquitination. Its function is as follows. E3 ubiquitin-protein ligase that mediates ubiquitination oF target proteins. Depending on the associated E2 ligase, mediates 'Lys-27'-, 'Lys-29'-, 'Lys-48'- and/or 'Lys-63'-linked polyubiquitination of substrates. Part of a BAG6-dependent quality control process ensuring that proteins of the secretory pathway that are mislocalized to the cytosol are degraded by the proteasome. Probably acts by providing the ubiquitin ligase activity associated with the BAG6 complex and be responsible for ubiquitination of the hydrophobic mislocalized proteins and their targeting to the proteasome. May also play a role in the endosomal recycling of IGF2R, the cation-independent mannose-6-phosphate receptor. May play a role in the endosomal sorting and degradation of several membrane receptors including EGFR, FLT3, MET and CXCR4, by mediating their ubiquitination. By ubiquitinating CDKN1A/p21 and targeting it for degradation, may also promote cell proliferation. May monoubiquitinate AICDA. Acts as a regulator of DNA repair by mediating 'Lys-27'- and 'Lys-29'-linked polyubiquitination of MRE11, thereby promoting the exonuclease activity of MRE11. This is E3 ubiquitin-protein ligase RNF126 from Mus musculus (Mouse).